The following is a 340-amino-acid chain: Putative RRN3-like protein RRN3P2 (340 aa).

It belongs to the RRN3 family.

This Homo sapiens (Human) protein is Putative RRN3-like protein RRN3P2 (RRN3P2).